We begin with the raw amino-acid sequence, 413 residues long: Cardiolipin synthase B (413 aa).

PLD phosphodiesterase domains lie at 108–135 (IFRR…SAEH) and 285–312 (RRRP…DPLS). Residues His113, Lys115, Asp120, His290, Lys292, and Asp297 contribute to the active site. Residues 388-413 (AQVPPPAQPEMETQDRVDPENSGVKP) are disordered.

It belongs to the phospholipase D family. Cardiolipin synthase subfamily. ClsB sub-subfamily.

It localises to the cell membrane. The enzyme catalyses 2 a 1,2-diacyl-sn-glycero-3-phospho-(1'-sn-glycerol) = a cardiolipin + glycerol. Its function is as follows. Catalyzes the phosphatidyl group transfer from one phosphatidylglycerol molecule to another to form cardiolipin (CL) (diphosphatidylglycerol) and glycerol. This chain is Cardiolipin synthase B, found in Salmonella typhi.